A 346-amino-acid polypeptide reads, in one-letter code: MSGNNSSLSYKDAGVDIDAGNALVERIKGSVKRTRRPEVMGGIGGFGALCELPTKYKQPVLVSGTDGVGTKLRLALDMNKHDTIGIDLVAMCVNDLIVQGAEPLFFLDYYATGKLDVDVAADVISGIAEGCIQAGCALIGGETAEMPGMYEGEDYDVAGFCVGVVEKEDIIDGTKVAVGDALIAVGSSGPHSNGYSLVRKILEVSGADKNEELAGRTIGEHLLEPTKIYIKSALKMIEQHDIHAISHITGGGFWENIPRVLPEGTKAVIDGKSWEWPVIFQWLQEKGNVATREMYRTFNCGVGLIVALPQDQAEAAVALLQQEGEKAWVIGAIAQAEAGEEQVEIN.

The protein belongs to the AIR synthase family.

Its subcellular location is the cytoplasm. The enzyme catalyses 2-formamido-N(1)-(5-O-phospho-beta-D-ribosyl)acetamidine + ATP = 5-amino-1-(5-phospho-beta-D-ribosyl)imidazole + ADP + phosphate + H(+). The protein operates within purine metabolism; IMP biosynthesis via de novo pathway; 5-amino-1-(5-phospho-D-ribosyl)imidazole from N(2)-formyl-N(1)-(5-phospho-D-ribosyl)glycinamide: step 2/2. This chain is Phosphoribosylformylglycinamidine cyclo-ligase, found in Vibrio vulnificus (strain YJ016).